A 274-amino-acid chain; its full sequence is Diaminopimelate epimerase (274 aa).

Residues asparagine 13, glutamine 47, and asparagine 65 each contribute to the substrate site. The Proton donor role is filled by cysteine 74. Substrate-binding positions include 75 to 76, asparagine 149, asparagine 182, and 200 to 201; these read GN and ER. Cysteine 209 functions as the Proton acceptor in the catalytic mechanism. 210 to 211 lines the substrate pocket; it reads GT.

The protein belongs to the diaminopimelate epimerase family. As to quaternary structure, homodimer.

It localises to the cytoplasm. It carries out the reaction (2S,6S)-2,6-diaminopimelate = meso-2,6-diaminopimelate. It participates in amino-acid biosynthesis; L-lysine biosynthesis via DAP pathway; DL-2,6-diaminopimelate from LL-2,6-diaminopimelate: step 1/1. Catalyzes the stereoinversion of LL-2,6-diaminopimelate (L,L-DAP) to meso-diaminopimelate (meso-DAP), a precursor of L-lysine and an essential component of the bacterial peptidoglycan. The sequence is that of Diaminopimelate epimerase from Rhizorhabdus wittichii (strain DSM 6014 / CCUG 31198 / JCM 15750 / NBRC 105917 / EY 4224 / RW1) (Sphingomonas wittichii).